The chain runs to 462 residues: EPD1-interacting receptor-like cytoplasmic serine/threonine-protein kinase 5A (462 aa).

The Protein kinase domain maps to 85 to 366 (FSSANFLGEG…DVVNILEPLL (282 aa)). Residues 91–99 (LGEGGFGPV) and Lys-120 contribute to the ATP site. Tyr-165 and Tyr-167 each carry phosphotyrosine. Asp-215 (proton acceptor) is an active-site residue.

This sequence belongs to the protein kinase superfamily. Ser/Thr protein kinase family. In terms of assembly, interacts with the Verticillium dahliae elicitor EPD1 (AC G2WWH6). Post-translationally, phosphorylated at Tyr-165 and Tyr-167 in the presence of pathogen-associated molecular patterns (PAMPs); this triggers the expression of pathogenesis-related genes (e.g. PR5 and PR16). Mostly expressed in roots and, to a lesser extent, in leaves.

Its subcellular location is the cell membrane. The catalysed reaction is L-seryl-[protein] + ATP = O-phospho-L-seryl-[protein] + ADP + H(+). It catalyses the reaction L-threonyl-[protein] + ATP = O-phospho-L-threonyl-[protein] + ADP + H(+). Functionally, required for pathogen-associated molecular pattern (PAMP, e.g. chitin and flg22)-triggered immunity (PTI) involving reactive oxygen species (ROS) accumulation and triggering plant defense, including defense-related gene expression (e.g. PR1 and LOX). Ensures specific recognition of the EPD1 effector of Verticillium dahliae, resulting in a hypersensitive response known as effector-triggered immunity (ETI), characterized by the activation of programmed cell death to limit infection by the pathogen. Priming plants with the incompatible pathogen V.dahliae leads to an increased resistance to compatible pathogens, as a result of systemic acquired resistance (SAR). This is EPD1-interacting receptor-like cytoplasmic serine/threonine-protein kinase 5A from Gossypium barbadense (Sea Island cotton).